The following is a 326-amino-acid chain: MEMO1 family protein TTHA0924 (326 aa).

Belongs to the MEMO1 family.

The sequence is that of MEMO1 family protein TTHA0924 from Thermus thermophilus (strain ATCC 27634 / DSM 579 / HB8).